The chain runs to 140 residues: uncharacterized protein (140 aa).

An N-terminal signal peptide occupies residues 1 to 22 (MRLRWQTIVLLLLILGGASASA).

This is an uncharacterized protein from Archaeoglobus fulgidus (strain ATCC 49558 / DSM 4304 / JCM 9628 / NBRC 100126 / VC-16).